We begin with the raw amino-acid sequence, 1342 residues long: DNA-directed RNA polymerase subunit beta (1342 aa).

The protein belongs to the RNA polymerase beta chain family. The RNAP catalytic core consists of 2 alpha, 1 beta, 1 beta' and 1 omega subunit. When a sigma factor is associated with the core the holoenzyme is formed, which can initiate transcription.

It catalyses the reaction RNA(n) + a ribonucleoside 5'-triphosphate = RNA(n+1) + diphosphate. Its function is as follows. DNA-dependent RNA polymerase catalyzes the transcription of DNA into RNA using the four ribonucleoside triphosphates as substrates. This Buchnera aphidicola subsp. Acyrthosiphon pisum (strain Tuc7) protein is DNA-directed RNA polymerase subunit beta.